The chain runs to 335 residues: Beta-hexosaminidase (335 aa).

Substrate-binding positions include Asp-60, Arg-68, Arg-133, and 163-164 (KH). Residue His-176 is the Proton donor/acceptor of the active site. The active-site Nucleophile is Asp-247.

It belongs to the glycosyl hydrolase 3 family. NagZ subfamily.

The protein localises to the cytoplasm. The enzyme catalyses Hydrolysis of terminal non-reducing N-acetyl-D-hexosamine residues in N-acetyl-beta-D-hexosaminides.. The protein operates within cell wall biogenesis; peptidoglycan recycling. In terms of biological role, plays a role in peptidoglycan recycling by cleaving the terminal beta-1,4-linked N-acetylglucosamine (GlcNAc) from peptide-linked peptidoglycan fragments, giving rise to free GlcNAc, anhydro-N-acetylmuramic acid and anhydro-N-acetylmuramic acid-linked peptides. The polypeptide is Beta-hexosaminidase (Stenotrophomonas maltophilia (strain K279a)).